Consider the following 317-residue polypeptide: L-lactate dehydrogenase (317 aa).

NAD(+) is bound by residues V17, D38, K43, Y68, and 82–83 (GV). Position 91 (R91) interacts with substrate. NAD(+)-binding positions include S104, 121–123 (VSN), and S146. Substrate is bound at residue 123 to 126 (NPVD). 151-154 (DTSR) provides a ligand contact to substrate. Beta-D-fructose 1,6-bisphosphate is bound by residues K156 and H171. H178 (proton acceptor) is an active-site residue. At Y224 the chain carries Phosphotyrosine. T233 provides a ligand contact to substrate.

It belongs to the LDH/MDH superfamily. LDH family. As to quaternary structure, homotetramer.

The protein resides in the cytoplasm. It catalyses the reaction (S)-lactate + NAD(+) = pyruvate + NADH + H(+). Its pathway is fermentation; pyruvate fermentation to lactate; (S)-lactate from pyruvate: step 1/1. Its activity is regulated as follows. Allosterically activated by fructose 1,6-bisphosphate (FBP). Catalyzes the conversion of lactate to pyruvate. This Clostridium perfringens (strain ATCC 13124 / DSM 756 / JCM 1290 / NCIMB 6125 / NCTC 8237 / Type A) protein is L-lactate dehydrogenase.